The primary structure comprises 250 residues: Proteasome subunit alpha type-4-A (250 aa).

Glycyl lysine isopeptide (Lys-Gly) (interchain with G-Cter in ubiquitin) cross-links involve residues Lys40 and Lys64.

The protein belongs to the peptidase T1A family. As to quaternary structure, component of the 20S core complex of the 26S proteasome. The 26S proteasome is composed of a core protease (CP), known as the 20S proteasome, capped at one or both ends by the 19S regulatory particle (RP/PA700). The 20S proteasome core is composed of 28 subunits that are arranged in four stacked rings, resulting in a barrel-shaped structure. The two end rings are each formed by seven alpha subunits, and the two central rings are each formed by seven beta subunits. The catalytic chamber with the active sites is on the inside of the barrel. As to expression, ubiquitous low levels, higher expression in siliques and flowers.

It localises to the cytoplasm. The protein localises to the nucleus. The proteasome is a multicatalytic proteinase complex which is characterized by its ability to cleave peptides with Arg, Phe, Tyr, Leu, and Glu adjacent to the leaving group at neutral or slightly basic pH. The proteasome has an ATP-dependent proteolytic activity. The chain is Proteasome subunit alpha type-4-A (PAC1) from Arabidopsis thaliana (Mouse-ear cress).